A 196-amino-acid chain; its full sequence is Protein LSM12 homolog B (196 aa).

The Sm domain maps to alanine 3–isoleucine 70. In terms of domain architecture, AD spans alanine 81–glutamate 175.

It belongs to the LSM12 family.

The sequence is that of Protein LSM12 homolog B (lsm12b) from Danio rerio (Zebrafish).